The sequence spans 206 residues: Large ribosomal subunit protein eL13z (206 aa).

The tract at residues 185–206 (TNKRHAGARAKRAAEAEKEEKK) is disordered. Basic residues predominate over residues 186–195 (NKRHAGARAK). The segment covering 196-206 (RAAEAEKEEKK) has biased composition (basic and acidic residues).

This sequence belongs to the eukaryotic ribosomal protein eL13 family.

It is found in the cytoplasm. The polypeptide is Large ribosomal subunit protein eL13z (RPL13B) (Arabidopsis thaliana (Mouse-ear cress)).